Consider the following 3391-residue polypeptide: Genome polyprotein (3391 aa).

An interaction with host EXOC1 region spans residues 1-15 (MNDQRKEAKNTPFNM). The Cytoplasmic portion of the chain corresponds to 1–101 (MNDQRKEAKN…LNILNRRRRS (101 aa)). Residues 37 to 72 (MLQGRGPLKLYMALVAFLRFLTIPPTAGILKRWGTI) are hydrophobic; homodimerization of capsid protein C. Positions 101–114 (SAGMIIMLIPTVMA) are cleaved as a propeptide — ER anchor for the Capsid protein C, removed in mature form by serine protease NS3. The propeptide at 101-114 (SAGMIIMLIPTVMA) is ER anchor for the capsid protein C, removed in mature form by serine protease NS3. Residues 102–122 (AGMIIMLIPTVMAFHLTTRNG) traverse the membrane as a helical segment. Topologically, residues 123 to 242 (EPHMIVSRQE…HVQRIETWIL (120 aa)) are extracellular. Residue Asn183 is glycosylated (N-linked (GlcNAc...) asparagine; by host). Residues 243-260 (RHPGFTMMAAILAYTIGT) traverse the membrane as a helical segment. Residue Thr261 is a topological domain, cytoplasmic. Residues 262–280 (HFQRALILILLTAVTPSMT) form a helical membrane-spanning segment. Topologically, residues 281 to 727 (MRCIGMSNRD…QVFGAIYGAA (447 aa)) are extracellular. 4 disulfide bridges follow: Cys283-Cys310, Cys340-Cys401, Cys354-Cys385, and Cys372-Cys396. Asn347 is a glycosylation site (N-linked (GlcNAc...) asparagine; by host). The segment at 378–391 (DRGWGNGCGLFGKG) is fusion peptide. N-linked (GlcNAc...) asparagine; by host glycosylation occurs at Asn433. 2 disulfides stabilise this stretch: Cys465/Cys565 and Cys582/Cys613. A helical membrane pass occupies residues 728-748 (FSGVSWTMKILIGVIITWIGM). The Cytoplasmic portion of the chain corresponds to 749–752 (NSRS). Residues 753 to 773 (TSLSVTLVLVGIVTLYLGVMV) traverse the membrane as a helical segment. At 774–1195 (QADSGCVVSW…MVGATMTDDI (422 aa)) the chain is on the extracellular side. 6 disulfide bridges follow: Cys779–Cys790, Cys830–Cys918, Cys954–Cys998, Cys1055–Cys1104, Cys1066–Cys1088, and Cys1087–Cys1091. Residues Asn905 and Asn982 are each glycosylated (N-linked (GlcNAc...) asparagine; by host). Asn1134 carries an N-linked (GlcNAc...) asparagine; by host glycan. The helical transmembrane segment at 1196 to 1220 (GMGVTYLALLAAFKVRPTFAAGLLL) threads the bilayer. The Cytoplasmic segment spans residues 1221 to 1226 (RKLTSK). The helical transmembrane segment at 1227-1245 (ELMMTTIGIVLSSQSTIPE) threads the bilayer. At 1246–1269 (TILELTDALALGMMVLKMVRNMEK) the chain is on the lumenal side. Residues 1270-1290 (YQLAVTIMAILCVPNAVILQN) traverse the membrane as a helical segment. Residue Ala1291 is a topological domain, cytoplasmic. Residues 1292 to 1310 (WKVSCTILAVVSVSPLFLT) traverse the membrane as a helical segment. Topologically, residues 1311–1317 (SSQQKTD) are lumenal. Residues 1318 to 1338 (WIPLALTIKGLNPTAIFLTTL) traverse the membrane as a helical segment. Residues 1339 to 1346 (SRTSKKRS) are Cytoplasmic-facing. The helical transmembrane segment at 1347–1367 (WPLNEAIMAVGMVSILASSLL) threads the bilayer. The Lumenal portion of the chain corresponds to 1368 to 1370 (KND). Residues 1371–1391 (IPMTGPLVAGGLLTVCYVLTG) traverse the membrane as a helical segment. The Cytoplasmic portion of the chain corresponds to 1392–1447 (RSADLELERAADVKWEDQAEISGSSPILSITISEDGSMSIKNEEEEQTLTILIRRG). The interval 1398-1437 (LERAADVKWEDQAEISGSSPILSITISEDGSMSIKNEEEE) is interacts with and activates NS3 protease. The segment at residues 1448-1468 (LLVISGLFPVSIPITAAAWYL) is an intramembrane region (helical). At 1469-2147 (WEVKKQRAGV…LSELPETLET (679 aa)) the chain is on the cytoplasmic side. One can recognise a Peptidase S7 domain in the interval 1476 to 1653 (AGVLWDVPSP…EKSIEDNPEI (178 aa)). Catalysis depends on charge relay system; for serine protease NS3 activity residues His1526, Asp1550, and Ser1610. Residues 1655 to 1811 (DDIFRKRRLT…QSNAPIIDEE (157 aa)) enclose the Helicase ATP-binding domain. The segment at 1659-1662 (RKRR) is important for RNA-binding. Residue 1668–1675 (LHPGAGKT) coordinates ATP. Residues 1759–1762 (DEAH) carry the DEAH box motif. The region spanning 1821–1988 (SGHEWVTDFK…IIPSMFEPER (168 aa)) is the Helicase C-terminal domain. Residue Lys1863 is modified to N6-acetyllysine; by host. The helical transmembrane segment at 2148-2168 (LLLLTLLATVTGGIFLFLMSA) threads the bilayer. Over 2169–2170 (RG) the chain is Lumenal. Positions 2171–2191 (IGKMTLGMCCIITASILLWYA) form an intramembrane region, helical. Gln2192 is a topological domain (lumenal). Residues 2193–2213 (IQPHWIAASIILEFFLIVLLI) form a helical membrane-spanning segment. At 2214–2228 (PEPEKQRTPQDNQLT) the chain is on the cytoplasmic side. Residues 2229-2249 (YVVIAILTVVAATMANEMGFL) traverse the membrane as a helical segment. Residues 2250–2274 (EKTKKDLGLGSIATQQPESNILDID) are Lumenal-facing. Residues 2275 to 2295 (LRPASAWTLYAVATTFVTPML) constitute an intramembrane region (helical). Over 2296 to 2316 (RHSIENSSVNVSLTAIANQAT) the chain is Lumenal. N-linked (GlcNAc...) asparagine; by host glycans are attached at residues Asn2301 and Asn2305. Positions 2317–2337 (VLMGLGKGWPLSKMDIGVPLL) form an intramembrane region, helical. Topologically, residues 2338–2347 (AIGCYSQVNP) are lumenal. Residues 2348–2368 (TTLTAALFLLVAHYAIIGPAL) form a helical membrane-spanning segment. Residues 2369–2413 (QAKASREAQKRAAAGIMKNPTVDGITVIDLDPIPYDPKFEKQLGQ) lie on the Cytoplasmic side of the membrane. A helical membrane pass occupies residues 2414–2434 (VMLLVLCVTQVLMMRTTWALC). Topologically, residues 2435-2459 (EALTLATGPISTLSEGNPGRFWNTT) are lumenal. N-linked (GlcNAc...) asparagine; by host glycosylation occurs at Asn2457. The chain crosses the membrane as a helical span at residues 2460–2480 (IAVSMANIFRGSYLAGAGLLF). Residues 2481 to 3391 (SIMKNTTNTR…REEEEAGVLW (911 aa)) lie on the Cytoplasmic side of the membrane. The 263-residue stretch at 2493 to 2755 (TGNIGETLGE…DVDLGSGTRN (263 aa)) folds into the mRNA cap 0-1 NS5-type MT domain. Ser2547 contributes to the S-adenosyl-L-methionine binding site. At Ser2547 the chain carries Phosphoserine. The active-site For 2'-O-MTase activity is the Lys2552. The short motif at 2568 to 2571 (VVDL) is the SUMO-interacting motif element. S-adenosyl-L-methionine-binding residues include Gly2577, Trp2578, Thr2595, Lys2596, Asp2622, and Val2623. The active-site For 2'-O-MTase activity is the Asp2637. Ile2638 lines the S-adenosyl-L-methionine pocket. Active-site for 2'-O-MTase activity residues include Lys2672 and Glu2708. Tyr2710 contacts S-adenosyl-L-methionine. Positions 2929, 2933, 2938, and 2941 each coordinate Zn(2+). The RdRp catalytic domain maps to 3020–3169 (AMYADDTAGW…PLDDRLPSAL (150 aa)). Zn(2+) contacts are provided by His3203, Cys3219, and Cys3338.

The protein in the N-terminal section; belongs to the class I-like SAM-binding methyltransferase superfamily. mRNA cap 0-1 NS5-type methyltransferase family. As to quaternary structure, homodimer. Interacts (via N-terminus) with host EXOC1 (via C-terminus); this interaction results in EXOC1 degradation through the proteasome degradation pathway. Forms heterodimers with envelope protein E in the endoplasmic reticulum and Golgi. In terms of assembly, homodimer; in the endoplasmic reticulum and Golgi. Interacts with protein prM. Interacts with non-structural protein 1. As to quaternary structure, homodimer; Homohexamer when secreted. Interacts with envelope protein E. Interacts with host PRKAA1. Interacts (via N-terminus) with serine protease NS3. In terms of assembly, forms a heterodimer with serine protease NS3. May form homooligomers. As to quaternary structure, forms a heterodimer with NS2B. Interacts with NS4B. Interacts with unphosphorylated RNA-directed RNA polymerase NS5; this interaction stimulates RNA-directed RNA polymerase NS5 guanylyltransferase activity. Interacts with host SHFL. Interacts with host MAVS; this interaction inhibits the synthesis of IFN-beta. Interacts with host SHFL. Interacts with host AUP1; the interaction occurs in the presence of Dengue virus NS4B and induces lipophagy which facilitates production of virus progeny particles. May interact with host SRPRA and SEC61G. In terms of assembly, interacts with serine protease NS3. As to quaternary structure, homodimer. Interacts with host STAT2; this interaction inhibits the phosphorylation of the latter, and, when all viral proteins are present (polyprotein), targets STAT2 for degradation. Interacts with serine protease NS3. Interacts with host PAF1 complex; the interaction may prevent the recruitment of the PAF1 complex to interferon-responsive genes, and thus reduces the immune response. Specific enzymatic cleavages in vivo yield mature proteins. Cleavages in the lumen of endoplasmic reticulum are performed by host signal peptidase, whereas cleavages in the cytoplasmic side are performed by serine protease NS3. Signal cleavage at the 2K-4B site requires a prior NS3 protease-mediated cleavage at the 4A-2K site. In terms of processing, cleaved in post-Golgi vesicles by a host furin, releasing the mature small envelope protein M, and peptide pr. This cleavage is incomplete as up to 30% of viral particles still carry uncleaved prM. Post-translationally, N-glycosylated. N-glycosylated. The excreted form is glycosylated and this is required for efficient secretion of the protein from infected cells. In terms of processing, acetylated by host KAT5. Acetylation modulates NS3 RNA-binding and unwinding activities and plays an important positive role for viral replication. Post-translationally, sumoylation of RNA-directed RNA polymerase NS5 increases NS5 protein stability allowing proper viral RNA replication. Phosphorylated on serines residues. This phosphorylation may trigger NS5 nuclear localization.

Its subcellular location is the virion. The protein resides in the host nucleus. It is found in the host cytoplasm. The protein localises to the host perinuclear region. It localises to the secreted. Its subcellular location is the virion membrane. The protein resides in the host endoplasmic reticulum membrane. It is found in the host mitochondrion. The enzyme catalyses Selective hydrolysis of -Xaa-Xaa-|-Yaa- bonds in which each of the Xaa can be either Arg or Lys and Yaa can be either Ser or Ala.. It catalyses the reaction RNA(n) + a ribonucleoside 5'-triphosphate = RNA(n+1) + diphosphate. It carries out the reaction a ribonucleoside 5'-triphosphate + H2O = a ribonucleoside 5'-diphosphate + phosphate + H(+). The catalysed reaction is ATP + H2O = ADP + phosphate + H(+). The enzyme catalyses a 5'-end (5'-triphosphoguanosine)-ribonucleoside in mRNA + S-adenosyl-L-methionine = a 5'-end (N(7)-methyl 5'-triphosphoguanosine)-ribonucleoside in mRNA + S-adenosyl-L-homocysteine. It catalyses the reaction a 5'-end (N(7)-methyl 5'-triphosphoguanosine)-ribonucleoside in mRNA + S-adenosyl-L-methionine = a 5'-end (N(7)-methyl 5'-triphosphoguanosine)-(2'-O-methyl-ribonucleoside) in mRNA + S-adenosyl-L-homocysteine + H(+). Its function is as follows. Plays a role in virus budding by binding to the cell membrane and gathering the viral RNA into a nucleocapsid that forms the core of a mature virus particle. During virus entry, may induce genome penetration into the host cytoplasm after hemifusion induced by the surface proteins. Can migrate to the cell nucleus where it modulates host functions. Overcomes the anti-viral effects of host EXOC1 by sequestering and degrading the latter through the proteasome degradation pathway. Inhibits RNA silencing by interfering with host Dicer. In terms of biological role, prevents premature fusion activity of envelope proteins in trans-Golgi by binding to envelope protein E at pH6.0. After virion release in extracellular space, gets dissociated from E dimers. Functionally, acts as a chaperone for envelope protein E during intracellular virion assembly by masking and inactivating envelope protein E fusion peptide. prM is the only viral peptide matured by host furin in the trans-Golgi network probably to avoid catastrophic activation of the viral fusion activity in acidic Golgi compartment prior to virion release. prM-E cleavage is inefficient, and many virions are only partially matured. These uncleaved prM would play a role in immune evasion. Its function is as follows. May play a role in virus budding. Exerts cytotoxic effects by activating a mitochondrial apoptotic pathway through M ectodomain. May display a viroporin activity. Binds to host cell surface receptor and mediates fusion between viral and cellular membranes. Envelope protein is synthesized in the endoplasmic reticulum in the form of heterodimer with protein prM. They play a role in virion budding in the ER, and the newly formed immature particle is covered with 60 spikes composed of heterodimer between precursor prM and envelope protein E. The virion is transported to the Golgi apparatus where the low pH causes dissociation of PrM-E heterodimers and formation of E homodimers. prM-E cleavage is inefficient, and many virions are only partially matured. These uncleaved prM would play a role in immune evasion. In terms of biological role, involved in immune evasion, pathogenesis and viral replication. Once cleaved off the polyprotein, is targeted to three destinations: the viral replication cycle, the plasma membrane and the extracellular compartment. Essential for viral replication. Required for formation of the replication complex and recruitment of other non-structural proteins to the ER-derived membrane structures. Excreted as a hexameric lipoparticle that plays a role against host immune response. Antagonizing the complement function. Binds to the host macrophages and dendritic cells. Inhibits signal transduction originating from Toll-like receptor 3 (TLR3). Mediates complement activation, which may contribute to the pathogenesis of the vascular leakage that occurs in severe dengue disease. Activates autophagy through the AMPK/ERK/mTOR signaling pathway. Mechanistically, acts as the assembly platform for STK11-AMPK interactions and promotes STK11-AMPK interactions. In turn, promotes phosphorylation of the AMPK kinase structural domain and activates AMPK, thereby positively regulating the AMPK/ERK/mTOR signaling pathway and inducing autophagy. Functionally, disrupts the host endothelial glycocalyx layer of host pulmonary microvascular endothelial cells, inducing degradation of sialic acid and shedding of heparan sulfate proteoglycans. NS1 induces expression of sialidases, heparanase, and activates cathepsin L, which activates heparanase via enzymatic cleavage. These effects are probably linked to the endothelial hyperpermeability observed in severe dengue disease. Its function is as follows. Component of the viral RNA replication complex that functions in virion assembly and antagonizes the host immune response. Required cofactor for the serine protease function of NS3. May have membrane-destabilizing activity and form viroporins. In terms of biological role, displays three enzymatic activities: serine protease, NTPase and RNA helicase. NS3 serine protease, in association with NS2B, performs its autocleavage and cleaves the polyprotein at dibasic sites in the cytoplasm: C-prM, NS2A-NS2B, NS2B-NS3, NS3-NS4A, NS4A-2K and NS4B-NS5. NS3 RNA helicase binds RNA and unwinds dsRNA in the 3' to 5' direction. Functionally, regulates the ATPase activity of the NS3 helicase activity. NS4A allows NS3 helicase to conserve energy during unwinding. Plays a role in the inhibition of the host innate immune response. Interacts with host MAVS and thereby prevents the interaction between RIGI and MAVS. In turn, IFN-beta production is impaired. Interacts with host AUP1 which mediates induction of lipophagy in host cells and facilitates production of virus progeny particles. Its function is as follows. Functions as a signal peptide for NS4B and is required for the interferon antagonism activity of the latter. Induces the formation of ER-derived membrane vesicles where the viral replication takes place. Inhibits interferon (IFN)-induced host STAT1 phosphorylation and nuclear translocation, thereby preventing the establishment of cellular antiviral state by blocking the IFN-alpha/beta pathway. In terms of biological role, replicates the viral (+) and (-) RNA genome, and performs the capping of genomes in the cytoplasm. NS5 methylates viral RNA cap at guanine N-7 and ribose 2'-O positions. Besides its role in RNA genome replication, also prevents the establishment of cellular antiviral state by blocking the interferon-alpha/beta (IFN-alpha/beta) signaling pathway. Inhibits host TYK2 and STAT2 phosphorylation, thereby preventing activation of JAK-STAT signaling pathway. May reduce immune responses by preventing the recruitment of the host PAF1 complex to interferon-responsive genes. This Dengue virus type 2 (strain 16681-PDK53) (DENV-2) protein is Genome polyprotein.